The sequence spans 304 residues: Acetylglutamate kinase (304 aa).

Residues 77–78 (GG), Arg99, and Asn201 contribute to the substrate site.

It belongs to the acetylglutamate kinase family. ArgB subfamily.

It is found in the cytoplasm. It carries out the reaction N-acetyl-L-glutamate + ATP = N-acetyl-L-glutamyl 5-phosphate + ADP. The protein operates within amino-acid biosynthesis; L-arginine biosynthesis; N(2)-acetyl-L-ornithine from L-glutamate: step 2/4. Its function is as follows. Catalyzes the ATP-dependent phosphorylation of N-acetyl-L-glutamate. This Methylibium petroleiphilum (strain ATCC BAA-1232 / LMG 22953 / PM1) protein is Acetylglutamate kinase.